Here is a 361-residue protein sequence, read N- to C-terminus: Velvet complex subunit B (361 aa).

Disordered stretches follow at residues Met1 to Ser44 and Ser139 to Gln161. The span at Pro10–Ser26 shows a compositional bias: pro residues. The region spanning Val54–Arg340 is the Velvet domain.

It belongs to the velvet family. VelB subfamily. As to quaternary structure, component of the heterotrimeric velvet complex composed of laeA, veA and velB; VeA acting as a bridging protein between laeA and velB. Forms a heterodimeric complex with vosA; the formation of the velB-vosA complex is light-dependent.

The protein localises to the nucleus. It localises to the cytoplasm. In terms of biological role, component of the velvet transcription factor complex that controls sexual/asexual developmental ratio in response to light, promoting sexual development in the darkness while stimulating asexual sporulation under illumination. The velvet complex acts as a global regulator for secondary metabolite gene expression. Component of the velB-VosA heterodimeric complex that plays a dual role in activating genes associated with spore maturation and repressing certain development-associated genes. The velB-VosA complex binds DNA through the DNA-binding domain of vosA that recognizes an 11-nucleotide consensus sequence 5'-CTGGCCGCGGC-3' consisting of two motifs in the promoters of key developmental regulatory genes. Controls the expression of the aflatoxin gene cluster. Likely coordinates with fluG to modulate sclerotial production. The polypeptide is Velvet complex subunit B (Aspergillus flavus (strain ATCC 200026 / FGSC A1120 / IAM 13836 / NRRL 3357 / JCM 12722 / SRRC 167)).